We begin with the raw amino-acid sequence, 384 residues long: L-cysteine:1D-myo-inositol 2-amino-2-deoxy-alpha-D-glucopyranoside ligase (384 aa).

Residue C16 coordinates Zn(2+). L-cysteinyl-5'-AMP is bound by residues 16–19 (CGIT), T31, and 54–56 (NVT). A 'HIGH' region motif is present at residues 18 to 28 (ITPYDATHLGH). Positions 159–164 (ERGGDP) match the 'ERGGDP' region motif. W199 contributes to the L-cysteinyl-5'-AMP binding site. Zn(2+) is bound at residue C203. An L-cysteinyl-5'-AMP-binding site is contributed by 221–223 (GSD). Zn(2+) is bound at residue H228. I255 contacts L-cysteinyl-5'-AMP. The 'KMSKS' region motif lies at 261–265 (KMSKS).

This sequence belongs to the class-I aminoacyl-tRNA synthetase family. MshC subfamily. In terms of assembly, monomer. It depends on Zn(2+) as a cofactor.

It catalyses the reaction 1D-myo-inositol 2-amino-2-deoxy-alpha-D-glucopyranoside + L-cysteine + ATP = 1D-myo-inositol 2-(L-cysteinylamino)-2-deoxy-alpha-D-glucopyranoside + AMP + diphosphate + H(+). Catalyzes the ATP-dependent condensation of GlcN-Ins and L-cysteine to form L-Cys-GlcN-Ins. In Mycobacterium avium (strain 104), this protein is L-cysteine:1D-myo-inositol 2-amino-2-deoxy-alpha-D-glucopyranoside ligase.